The primary structure comprises 76 residues: ATP synthase subunit c (76 aa).

Helical transmembrane passes span 13 to 33 (LNVV…GILI) and 55 to 75 (FLGL…AFIF).

The protein belongs to the ATPase C chain family. F-type ATPases have 2 components, F(1) - the catalytic core - and F(0) - the membrane proton channel. F(1) has five subunits: alpha(3), beta(3), gamma(1), delta(1), epsilon(1). F(0) has three main subunits: a(1), b(2) and c(10-14). The alpha and beta chains form an alternating ring which encloses part of the gamma chain. F(1) is attached to F(0) by a central stalk formed by the gamma and epsilon chains, while a peripheral stalk is formed by the delta and b chains.

It localises to the cell membrane. Its function is as follows. F(1)F(0) ATP synthase produces ATP from ADP in the presence of a proton or sodium gradient. F-type ATPases consist of two structural domains, F(1) containing the extramembraneous catalytic core and F(0) containing the membrane proton channel, linked together by a central stalk and a peripheral stalk. During catalysis, ATP synthesis in the catalytic domain of F(1) is coupled via a rotary mechanism of the central stalk subunits to proton translocation. Key component of the F(0) channel; it plays a direct role in translocation across the membrane. A homomeric c-ring of between 10-14 subunits forms the central stalk rotor element with the F(1) delta and epsilon subunits. In Bifidobacterium animalis subsp. lactis (strain AD011), this protein is ATP synthase subunit c.